The chain runs to 1172 residues: DNA-directed RNA polymerase subunit beta (1172 aa).

This sequence belongs to the RNA polymerase beta chain family. As to quaternary structure, the RNAP catalytic core consists of 2 alpha, 1 beta, 1 beta' and 1 omega subunit. When a sigma factor is associated with the core the holoenzyme is formed, which can initiate transcription.

The catalysed reaction is RNA(n) + a ribonucleoside 5'-triphosphate = RNA(n+1) + diphosphate. Functionally, DNA-dependent RNA polymerase catalyzes the transcription of DNA into RNA using the four ribonucleoside triphosphates as substrates. This chain is DNA-directed RNA polymerase subunit beta, found in Thermosipho melanesiensis (strain DSM 12029 / CIP 104789 / BI429).